Here is a 442-residue protein sequence, read N- to C-terminus: tRNA modification GTPase MnmE (442 aa).

Residues Arg-21, Glu-79, and Lys-118 each coordinate (6S)-5-formyl-5,6,7,8-tetrahydrofolate. The TrmE-type G domain occupies 214-367 (GFKIAIIGKP…LKEELQNYLN (154 aa)). Asn-224 lines the K(+) pocket. Residues 224–229 (NVGKSS), 243–249 (SDIAGTT), and 268–271 (DTAG) each bind GTP. Ser-228 is a Mg(2+) binding site. K(+) contacts are provided by Ser-243, Ile-245, and Thr-248. Thr-249 contributes to the Mg(2+) binding site. Lys-442 contacts (6S)-5-formyl-5,6,7,8-tetrahydrofolate.

The protein belongs to the TRAFAC class TrmE-Era-EngA-EngB-Septin-like GTPase superfamily. TrmE GTPase family. Homodimer. Heterotetramer of two MnmE and two MnmG subunits. The cofactor is K(+).

It localises to the cytoplasm. Functionally, exhibits a very high intrinsic GTPase hydrolysis rate. Involved in the addition of a carboxymethylaminomethyl (cmnm) group at the wobble position (U34) of certain tRNAs, forming tRNA-cmnm(5)s(2)U34. This Campylobacter jejuni subsp. doylei (strain ATCC BAA-1458 / RM4099 / 269.97) protein is tRNA modification GTPase MnmE.